The primary structure comprises 57 residues: Large ribosomal subunit protein uL30 (57 aa).

This sequence belongs to the universal ribosomal protein uL30 family. As to quaternary structure, part of the 50S ribosomal subunit.

The chain is Large ribosomal subunit protein uL30 from Clostridium perfringens (strain ATCC 13124 / DSM 756 / JCM 1290 / NCIMB 6125 / NCTC 8237 / Type A).